The chain runs to 136 residues: Transmembrane protein 203 (136 aa).

The segment at Met1–Val51 is interaction with STING1. A run of 4 helical transmembrane segments spans residues Phe14–Ala34, Phe50–Phe72, Val81–Leu101, and Leu112–Ala132. Residues Pro52–Asn136 are required for the lysosomal localization of the STING-TMEM203 complex.

In terms of assembly, homodimer. Interacts with ATP2A2, ITPR3 and STIM1. Interacts with STING1 (via transmembrane domain). As to expression, increased expression seen in T-lymphocytes from patients with systemic lupus erythematosus (SLE).

It localises to the endoplasmic reticulum membrane. The protein localises to the endoplasmic reticulum-Golgi intermediate compartment. The protein resides in the lysosome membrane. Functionally, involved in the regulation of cellular calcium homeotasis. Required for spermatogenesis. Acts as a regulator of STING-mediated inflammatory signaling in macrophages. Forms a complex with STING, promoting the activity of TBK1 kinase and the transcription factor IRF3, leading to activation of type I interferon expression. This is Transmembrane protein 203 (TMEM203) from Homo sapiens (Human).